The sequence spans 180 residues: UPF0227 protein YcfP (180 aa).

Belongs to the UPF0227 family.

This is UPF0227 protein YcfP from Salmonella paratyphi A (strain ATCC 9150 / SARB42).